The primary structure comprises 55 residues: Large ribosomal subunit protein bL33 (55 aa).

This sequence belongs to the bacterial ribosomal protein bL33 family.

The polypeptide is Large ribosomal subunit protein bL33 (Zymomonas mobilis subsp. mobilis (strain ATCC 31821 / ZM4 / CP4)).